The sequence spans 545 residues: Chaperonin GroEL (545 aa).

ATP is bound by residues 31–34 (TLGP), 88–92 (DGTTT), G415, 478–480 (NAA), and D494.

Belongs to the chaperonin (HSP60) family. Forms a cylinder of 14 subunits composed of two heptameric rings stacked back-to-back. Interacts with the co-chaperonin GroES.

It is found in the cytoplasm. The catalysed reaction is ATP + H2O + a folded polypeptide = ADP + phosphate + an unfolded polypeptide.. Functionally, together with its co-chaperonin GroES, plays an essential role in assisting protein folding. The GroEL-GroES system forms a nano-cage that allows encapsulation of the non-native substrate proteins and provides a physical environment optimized to promote and accelerate protein folding. This Streptococcus pyogenes serotype M4 (strain MGAS10750) protein is Chaperonin GroEL.